A 358-amino-acid polypeptide reads, in one-letter code: Neuronal-specific septin-3 (358 aa).

Residues 1-10 (MSKGLPETRT) show a composition bias toward basic and acidic residues. Residues 1 to 30 (MSKGLPETRTDAAMSELVPEPRPKPAVPMK) form a disordered region. Residues 58 to 331 (TGFDFNIMVV…ETYRAKRLND (274 aa)) enclose the Septin-type G domain. The G1 motif stretch occupies residues 68 to 75 (GQSGLGKS). Residue 68–75 (GQSGLGKS) participates in GTP binding. Phosphoserine is present on Ser91. Position 102 (Thr102) interacts with GTP. Residues 125–128 (DTPG) are G3 motif. The tract at residues 207–210 (AKAD) is G4 motif. GTP contacts are provided by residues 208–216 (KADTMTLEE), Gly265, and Arg280.

Belongs to the TRAFAC class TrmE-Era-EngA-EngB-Septin-like GTPase superfamily. Septin GTPase family. As to quaternary structure, septins polymerize into heterooligomeric protein complexes that form filaments, and can associate with cellular membranes, actin filaments and microtubules. GTPase activity is required for filament formation. Phosphorylated by PKG on serine residues. Phosphorylated by PKG on Ser-91. Brain-specific.

Its subcellular location is the cytoplasm. The protein localises to the cytoskeleton. It is found in the synapse. In terms of biological role, filament-forming cytoskeletal GTPase. May play a role in cytokinesis (Potential). This chain is Neuronal-specific septin-3, found in Homo sapiens (Human).